Reading from the N-terminus, the 500-residue chain is Protein gar2 (500 aa).

2 stretches are compositionally biased toward basic and acidic residues: residues 1 to 41 (MAKK…KEIA) and 59 to 68 (KRASSPEPSK). Residues 1 to 262 (MAKKDKTSVK…TKPSQDSNET (262 aa)) form a disordered region. Basic residues predominate over residues 69–78 (KSVKKQKKSK). A compositionally biased stretch (low complexity) spans 90 to 120 (ESSSSESESSSSESESSSSESESSSSESSSS). Residues 126–137 (VIVKTEEKKESS) show a composition bias toward basic and acidic residues. Residues Ser-143, Ser-144, and Ser-146 each carry the phosphoserine modification. The span at 152–163 (AVVKIEEKKESS) shows a compositional bias: basic and acidic residues. Low complexity predominate over residues 164 to 182 (SDSSSESSSSESESESSSS). A compositionally biased stretch (basic and acidic residues) spans 191 to 201 (VEKTEEKKEGS). Residues 202 to 218 (SESSSDSESSSDSSSES) show a composition bias toward low complexity. Acidic residues predominate over residues 219-233 (GDSDSSSDSESESSS). Over residues 234-250 (EDEKKRKAEPASEERPA) the composition is skewed to basic and acidic residues. RRM domains are found at residues 263–341 (CTVF…LSNP) and 366–443 (DTVF…FSTP). Positions 441–500 (STPRTGGGSRGGRGGFGGRGGFGGRGGFGGGRGRGRGGARSGNPNRGSVAPFSGNKVTFD) are disordered. A compositionally biased stretch (gly residues) spans 445 to 480 (TGGGSRGGRGGFGGRGGFGGRGGFGGGRGRGRGGAR).

This sequence belongs to the RRM GAR family.

It is found in the nucleus. The protein resides in the nucleolus. Functionally, helps the assembly of pre-ribosomal particles containing 18S rRNA. The chain is Protein gar2 (gar2) from Schizosaccharomyces pombe (strain 972 / ATCC 24843) (Fission yeast).